The primary structure comprises 667 residues: WD repeat-containing protein 48 homolog (667 aa).

WD repeat units lie at residues 26–65 (QHRN…NDKY), 71–110 (HHND…CMST), 113–152 (THRD…ALTA), 164–203 (GSKD…RSMK), 206–245 (GHTE…CIQT), 248–287 (VHKE…NKML), 290–329 (EEKA…RCTL), and 349–388 (KGGA…KKEE). Positions 591 to 615 (ETTPSGGNANNSLQNSQSDANSEGS) are disordered.

This sequence belongs to the WD repeat WDR48 family. Catalytic component of the Usp12-46 deubiquitylase complex consisting of Usp12-46, Wdr20 and Uaf1; regulatory subunit that, together wtih Wdr20, stabilizes Usp12-46. The Usp12-46 deubiquitylase complex associates with arr/arrow; the interaction leads to deubiquitination and stabilization of arr/arrow.

Its function is as follows. Regulatory component of the Usp12-46 deubiquitylase complex. activates deubiquitination by increasing the catalytic turnover without increasing the affinity of deubiquitinating enzymes for the substrate. The complex deubiquitylates the wg/wingless-signaling receptor arr/arrow, which stabilizes the receptor and increases its concentration at the cell surface; this enhances the sensitivity of cells to wg/wingless-signal stimulation. This increases the amplitude and spatial range of the signaling response to the wg/wingless morphogen gradient, facilitating the precise concentration-dependent regulation of its target genes. Together with Wdr20 and Usp12-46 required for wg/wingless-mediated signaling in the wing imaginal disc and for wg/wingless-dependent regulation of intestinal stem cell proliferation. In Drosophila virilis (Fruit fly), this protein is WD repeat-containing protein 48 homolog.